Consider the following 1108-residue polypeptide: Activity-dependent neuroprotector homeobox protein (1108 aa).

Residues 1-685 (MFQLPVNNLG…ASTITLHLVH (685 aa)) form a binds to beta-catenin/CTNNB1 region. Glycyl lysine isopeptide (Lys-Gly) (interchain with G-Cter in SUMO2) cross-links involve residues lysine 39 and lysine 72. A C2H2-type 1; degenerate zinc finger spans residues 74-97 (FCCSACPFSSKFFSAYKSHFRNVH). Serine 98 is modified (phosphoserine). The C2H2-type 2; degenerate zinc finger occupies 107–129 (LNCPYCTFNADKKTLETHIKIFH). A disordered region spans residues 133–154 (SSAPSSSLSTFKDKNKNDGLKP). The segment covering 143–154 (FKDKNKNDGLKP) has biased composition (basic and acidic residues). Glycyl lysine isopeptide (Lys-Gly) (interchain with G-Cter in SUMO2) cross-links involve residues lysine 144 and lysine 155. The segment at 165–188 (YYCKKCTYRDPLYEIVRKHIYREH) adopts a C2H2-type 3; degenerate zinc-finger fold. Residues lysine 203, lysine 231, lysine 266, lysine 274, lysine 278, lysine 279, lysine 311, and lysine 335 each participate in a glycyl lysine isopeptide (Lys-Gly) (interchain with G-Cter in SUMO2) cross-link. The segment at 221–244 (IHCKRCLFMPKSYEALVQHVIEDH) adopts a C2H2-type 4; degenerate zinc-finger fold. Position 348 is an asymmetric dimethylarginine (arginine 348). Positions 354 to 361 (NAPVSIPQ) are neuroprotective peptide; contributes to CTNNB1-binding, but less effective than whole N-terminal region. Residues 360–438 (PQQSQSVKQL…PAATGPPPSN (79 aa)) form a disordered region. Glycyl lysine isopeptide (Lys-Gly) (interchain with G-Cter in SUMO2) cross-links involve residues lysine 367 and lysine 407. Positions 393-422 (SLQTANTSLPPGQVKSPSVSQSQASRVLGQ) are enriched in polar residues. Phosphoserine occurs at positions 408 and 412. Residue lysine 426 forms a Glycyl lysine isopeptide (Lys-Gly) (interchain with G-Cter in SUMO2) linkage. A compositionally biased stretch (pro residues) spans 426–437 (KPPPAATGPPPS). The C2H2-type 5; atypical zinc-finger motif lies at 446-468 (KICTICNELFPENVYSVHFEKEH). 2 C2H2-type zinc fingers span residues 488-509 (SKCL…MLIH) and 511-534 (LSCP…RMVH). Residues lysine 599 and lysine 605 each participate in a glycyl lysine isopeptide (Lys-Gly) (interchain with G-Cter in SUMO2) cross-link. Position 607 is a phosphoserine (serine 607). Residues lysine 615, lysine 620, lysine 631, and lysine 657 each participate in a glycyl lysine isopeptide (Lys-Gly) (interchain with G-Cter in SUMO2) cross-link. Residues 621–646 (TLCPLCFSILKGPISDALAHHLRERH) form a C2H2-type 8; atypical zinc finger. A C2H2-type 9; atypical zinc finger spans residues 661–685 (YKCIHCLGVYTSNMTASTITLHLVH). Positions 690–711 (GKTQNGQDKTNAPSRLNQSPGL) are disordered. Over residues 691–709 (KTQNGQDKTNAPSRLNQSP) the composition is skewed to polar residues. Lysine 698 is covalently cross-linked (Glycyl lysine isopeptide (Lys-Gly) (interchain with G-Cter in SUMO2)). A Phosphoserine modification is found at serine 708. Residues lysine 715, lysine 727, and lysine 730 each participate in a glycyl lysine isopeptide (Lys-Gly) (interchain with G-Cter in SUMO2) cross-link. Serine 737 carries the phosphoserine modification. Residue lysine 744 forms a Glycyl lysine isopeptide (Lys-Gly) (interchain with G-Cter in SUMO2) linkage. A DNA-binding region (homeobox) is located at residues 753–813 (LDPKGHEDDS…SNKRKKCVRD (61 aa)). At serine 804 the chain carries Phosphoserine. Residues lysine 806, lysine 828, and lysine 834 each participate in a glycyl lysine isopeptide (Lys-Gly) (interchain with G-Cter in SUMO2) cross-link. The segment covering 851–880 (KDSRVNASKTVDKKHNLGKEDDSFSDSFEH) has biased composition (basic and acidic residues). The disordered stretch occupies residues 851–1037 (KDSRVNASKT…DTEQLKWKNS (187 aa)). Residues serine 875, serine 877, serine 885, serine 888, and serine 904 each carry the phosphoserine modification. Glycyl lysine isopeptide (Lys-Gly) (interchain with G-Cter in SUMO2) cross-links involve residues lysine 913, lysine 928, and lysine 941. The segment covering 928–938 (KEEEEEEEEED) has biased composition (acidic residues). Residues 939-959 (GSKYETIHLTEEPAKLMHDAS) are compositionally biased toward basic and acidic residues. Phosphoserine is present on residues serine 959 and serine 961. The span at 977–988 (PSESGPGSQQIS) shows a compositional bias: polar residues. Lysine 1022 is covalently cross-linked (Glycyl lysine isopeptide (Lys-Gly) (interchain with G-Cter in SUMO2)). Residues lysine 1041 and lysine 1048 each carry the N6-acetyllysine; alternate modification. Glycyl lysine isopeptide (Lys-Gly) (interchain with G-Cter in SUMO2); alternate cross-links involve residues lysine 1041 and lysine 1048. The segment at 1050 to 1108 (QSQWENASENAERLPNPQIEWQNSTIDSEDGEQFDSMTDGVADPMHGSLTGVKLSSQQA) is disordered. At serine 1077 the chain carries Phosphoserine.

As to quaternary structure, interacts (via N-terminal region) with beta-catenin/CTNNB1 (via the central armadillo domains); interaction is direct and stabilizes CTNNB1 by modulating its phosphorylation by glycogen synthase kinase-3 beta GSK3B. In terms of tissue distribution, expressed in the brain, with a higher expression in cerebellum and hippocampus. Weakly expressed in lung, kidney and intestine, and expressed at intermediate level in testis.

Its subcellular location is the nucleus. The protein localises to the chromosome. Functionally, may be involved in transcriptional regulation. May mediate some of the neuroprotective peptide VIP-associated effects involving normal growth and cancer proliferation. Positively modulates WNT-beta-catenin/CTNN1B signaling, acting by regulating phosphorylation of, and thereby stabilizing, CTNNB1. May be required for neural induction and neuronal differentiation. May be involved in erythroid differentiation. This Mus musculus (Mouse) protein is Activity-dependent neuroprotector homeobox protein (Adnp).